A 294-amino-acid chain; its full sequence is Transcription termination/antitermination protein NusG (294 aa).

The segment at 1-91 (MSDPNLNDAV…EEAEPAAPVD (91 aa)) is disordered. Acidic residues predominate over residues 25-39 (DIVEAADSVDPDQAE). A compositionally biased stretch (low complexity) spans 40–53 (AADLAAGEPAERAA). Acidic residues predominate over residues 59–85 (DDSDEDDAAAEEAVEADDESADEEEAE).

It belongs to the NusG family.

Functionally, participates in transcription elongation, termination and antitermination. This chain is Transcription termination/antitermination protein NusG, found in Streptomyces griseus.